Consider the following 153-residue polypeptide: 3-hydroxyacyl-[acyl-carrier-protein] dehydratase FabZ (153 aa).

His57 is an active-site residue.

This sequence belongs to the thioester dehydratase family. FabZ subfamily.

Its subcellular location is the cytoplasm. The catalysed reaction is a (3R)-hydroxyacyl-[ACP] = a (2E)-enoyl-[ACP] + H2O. Functionally, involved in unsaturated fatty acids biosynthesis. Catalyzes the dehydration of short chain beta-hydroxyacyl-ACPs and long chain saturated and unsaturated beta-hydroxyacyl-ACPs. The polypeptide is 3-hydroxyacyl-[acyl-carrier-protein] dehydratase FabZ (Aeromonas hydrophila subsp. hydrophila (strain ATCC 7966 / DSM 30187 / BCRC 13018 / CCUG 14551 / JCM 1027 / KCTC 2358 / NCIMB 9240 / NCTC 8049)).